A 34-amino-acid polypeptide reads, in one-letter code: Crassicorin-II (34 aa).

An intrachain disulfide couples cysteine 6 to cysteine 30.

In terms of tissue distribution, highly expressed by the mesenteries. Moderately expressed by the pharynx. Weakly expressed by the gonad and pedal disk. No expression in tentacle.

It localises to the secreted. The protein resides in the nematocyst. Functionally, peptide with both antimicrobial and neurotoxin activities. Cationic AMP with antimicrobial activity against both Gram-positive bacteria (B.subtilis) and Gram-negative bacteria (E.coli and S.enterica). Shows no significant antimicrobial activity against bacteria S.aureus and P.aeruginosa, as well as the fungus C.albicans. In vivo, induces reversible paralytic activity towards the shrimp P.paucidens. May act by impairing sodium or potassium channels in the prey. This is Crassicorin-II from Urticina crassicornis (Mottled anemone).